Consider the following 311-residue polypeptide: Protoheme IX farnesyltransferase (311 aa).

8 helical membrane passes run 19 to 39 (VLAY…VATI), 55 to 75 (ILAT…LNCV), 101 to 121 (NAFV…WWQA), 123 to 143 (LLSG…YTLG), 169 to 189 (AVTG…FFWT), 221 to 241 (VTKQ…ALVP), 242 to 262 (ATGV…LLMA), and 290 to 310 (VVFC…GSFF).

This sequence belongs to the UbiA prenyltransferase family. Protoheme IX farnesyltransferase subfamily.

It is found in the cell membrane. The catalysed reaction is heme b + (2E,6E)-farnesyl diphosphate + H2O = Fe(II)-heme o + diphosphate. It functions in the pathway porphyrin-containing compound metabolism; heme O biosynthesis; heme O from protoheme: step 1/1. In terms of biological role, converts heme B (protoheme IX) to heme O by substitution of the vinyl group on carbon 2 of heme B porphyrin ring with a hydroxyethyl farnesyl side group. This Nocardia farcinica (strain IFM 10152) protein is Protoheme IX farnesyltransferase.